Reading from the N-terminus, the 338-residue chain is RNA 3'-terminal phosphate cyclase (338 aa).

Residues Gln103 and 283-287 (YLADQ) contribute to the ATP site. Residue His308 is the Tele-AMP-histidine intermediate of the active site.

It belongs to the RNA 3'-terminal cyclase family. Type 1 subfamily.

Its subcellular location is the cytoplasm. The enzyme catalyses a 3'-end 3'-phospho-ribonucleotide-RNA + ATP = a 3'-end 2',3'-cyclophospho-ribonucleotide-RNA + AMP + diphosphate. Its function is as follows. Catalyzes the conversion of 3'-phosphate to a 2',3'-cyclic phosphodiester at the end of RNA. The mechanism of action of the enzyme occurs in 3 steps: (A) adenylation of the enzyme by ATP; (B) transfer of adenylate to an RNA-N3'P to produce RNA-N3'PP5'A; (C) and attack of the adjacent 2'-hydroxyl on the 3'-phosphorus in the diester linkage to produce the cyclic end product. The biological role of this enzyme is unknown but it is likely to function in some aspects of cellular RNA processing. In Escherichia coli O127:H6 (strain E2348/69 / EPEC), this protein is RNA 3'-terminal phosphate cyclase.